The primary structure comprises 295 residues: Pyridoxal 5'-phosphate synthase subunit PdxS (295 aa).

Position 25 (Asp-25) interacts with D-ribose 5-phosphate. Catalysis depends on Lys-82, which acts as the Schiff-base intermediate with D-ribose 5-phosphate. Gly-154 contributes to the D-ribose 5-phosphate binding site. Position 166 (Arg-166) interacts with D-glyceraldehyde 3-phosphate. Residues Gly-215 and 236–237 contribute to the D-ribose 5-phosphate site; that span reads GS.

This sequence belongs to the PdxS/SNZ family. In terms of assembly, in the presence of PdxT, forms a dodecamer of heterodimers.

The catalysed reaction is aldehydo-D-ribose 5-phosphate + D-glyceraldehyde 3-phosphate + L-glutamine = pyridoxal 5'-phosphate + L-glutamate + phosphate + 3 H2O + H(+). The protein operates within cofactor biosynthesis; pyridoxal 5'-phosphate biosynthesis. Its function is as follows. Catalyzes the formation of pyridoxal 5'-phosphate from ribose 5-phosphate (RBP), glyceraldehyde 3-phosphate (G3P) and ammonia. The ammonia is provided by the PdxT subunit. Can also use ribulose 5-phosphate and dihydroxyacetone phosphate as substrates, resulting from enzyme-catalyzed isomerization of RBP and G3P, respectively. The sequence is that of Pyridoxal 5'-phosphate synthase subunit PdxS from Bacillus cereus (strain Q1).